A 501-amino-acid polypeptide reads, in one-letter code: Endoglucanase 1 (501 aa).

Residues 1-29 form the signal peptide; sequence MALYLSSSRLITFLSFILLLSNGFSSSSS. The active-site Nucleophile is the Asp-96. Active-site residues include His-422, Asp-473, and Glu-482.

It belongs to the glycosyl hydrolase 9 (cellulase E) family.

Its subcellular location is the secreted. It catalyses the reaction Endohydrolysis of (1-&gt;4)-beta-D-glucosidic linkages in cellulose, lichenin and cereal beta-D-glucans.. The polypeptide is Endoglucanase 1 (CEL2) (Arabidopsis thaliana (Mouse-ear cress)).